A 237-amino-acid chain; its full sequence is Probable GTP-binding protein EngB (237 aa).

The EngB-type G domain occupies Thr13–Tyr188. GTP-binding positions include Gly21–Ser28, Gly48–Met52, Asp67–Gly70, Thr134–Asp137, and Phe167–Ser169. Ser28 and Thr50 together coordinate Mg(2+). Positions Asp207–Ser220 are enriched in acidic residues. A disordered region spans residues Asp207–Ile237. The segment covering Ile227–Ile237 has biased composition (basic and acidic residues).

This sequence belongs to the TRAFAC class TrmE-Era-EngA-EngB-Septin-like GTPase superfamily. EngB GTPase family. Requires Mg(2+) as cofactor.

In terms of biological role, necessary for normal cell division and for the maintenance of normal septation. The sequence is that of Probable GTP-binding protein EngB from Acinetobacter baylyi (strain ATCC 33305 / BD413 / ADP1).